We begin with the raw amino-acid sequence, 563 residues long: Arginine--tRNA ligase (563 aa).

The 'HIGH' region signature appears at 121-131 (PNIAKPMSMGH).

The protein belongs to the class-I aminoacyl-tRNA synthetase family. As to quaternary structure, monomer.

It localises to the cytoplasm. The catalysed reaction is tRNA(Arg) + L-arginine + ATP = L-arginyl-tRNA(Arg) + AMP + diphosphate. This chain is Arginine--tRNA ligase, found in Leuconostoc mesenteroides subsp. mesenteroides (strain ATCC 8293 / DSM 20343 / BCRC 11652 / CCM 1803 / JCM 6124 / NCDO 523 / NBRC 100496 / NCIMB 8023 / NCTC 12954 / NRRL B-1118 / 37Y).